The following is a 465-amino-acid chain: Biotin biosynthesis bifunctional protein BioCD (465 aa).

Residues 1–254 (MTPFLPDRSI…AYGQWRKPRG (254 aa)) form a malonyl-ACP O-methyltransferase region. Residues D234 and 263 to 268 (GVGKTL) contribute to the ATP site. Residues 255-465 (VFVTGTDTGV…DSLLSSNASR (211 aa)) form a DTB synthetase region. T267 is a Mg(2+) binding site. K283 is an active-site residue. T287 is a substrate binding site. ATP is bound by residues D295, 351 to 354 (EGAG), and 435 to 437 (PQL). D295 and E351 together coordinate Mg(2+).

This sequence in the N-terminal section; belongs to the methyltransferase superfamily. In the C-terminal section; belongs to the dethiobiotin synthetase family. Mg(2+) serves as cofactor.

It is found in the cytoplasm. The enzyme catalyses (7R,8S)-7,8-diammoniononanoate + CO2 + ATP = (4R,5S)-dethiobiotin + ADP + phosphate + 3 H(+). The catalysed reaction is malonyl-[ACP] + S-adenosyl-L-methionine = malonyl-[ACP] methyl ester + S-adenosyl-L-homocysteine. Its pathway is cofactor biosynthesis; biotin biosynthesis; biotin from 7,8-diaminononanoate: step 1/2. The protein operates within cofactor biosynthesis; biotin biosynthesis. Functionally, converts the free carboxyl group of a malonyl-thioester to its methyl ester by transfer of a methyl group from S-adenosyl-L-methionine (SAM). It allows synthesis of pimeloyl-ACP via the fatty acid synthetic pathway. Its function is as follows. Catalyzes a mechanistically unusual reaction, the ATP-dependent insertion of CO2 between the N7 and N8 nitrogen atoms of 7,8-diaminopelargonic acid (DAPA, also called 7,8-diammoniononanoate) to form a ureido ring. The sequence is that of Biotin biosynthesis bifunctional protein BioCD from Bordetella avium (strain 197N).